The following is a 270-amino-acid chain: MEQFYYILKYLILGLFQGLTEPIPISSSGHLVLAQHLLGLKIEGFSFELLVNSASLLAVLLIYRNDLIRLTKNGLSYIFTRAEDAKSDFFFIIYLVIATIPAGVIGVLFKDYIDQYLKGVKMVGISLLITAVGLWIIRNLRGRRNDGDLSMKDAIIVGLAQACALIPGISRSGATIVAAMLLGMKQETALRFSFLLYIPVSLGGLLLSITDIAKDPNLDTLFVPYIVAFIATFIMTYISLKWFMNIMAKGNLKYFSFYCIIVGVLTLIFL.

7 helical membrane passes run Y5–I25, I42–I62, F89–F109, L117–I137, F192–I212, T220–L240, and G250–L270.

The protein belongs to the UppP family.

Its subcellular location is the cell membrane. The enzyme catalyses di-trans,octa-cis-undecaprenyl diphosphate + H2O = di-trans,octa-cis-undecaprenyl phosphate + phosphate + H(+). In terms of biological role, catalyzes the dephosphorylation of undecaprenyl diphosphate (UPP). Confers resistance to bacitracin. In Bacillus anthracis, this protein is Undecaprenyl-diphosphatase 3.